A 617-amino-acid polypeptide reads, in one-letter code: Translation initiation factor IF-2 (617 aa).

Residues 1-11 show a composition bias toward basic residues; the sequence is MSKHKPRHFQK. The segment at 1 to 25 is disordered; that stretch reads MSKHKPRHFQKNKFDNRAKTSAKQQ. A tr-type G domain is found at 119–288; it reads PRPPIVTIMG…ILLVAEVEDY (170 aa). The interval 128-135 is G1; it reads GHVDHGKT. Residue 128-135 coordinates GTP; the sequence is GHVDHGKT. The tract at residues 153 to 157 is G2; that stretch reads GITQK. The interval 175–178 is G3; the sequence is DTPG. Residues 175–179 and 229–232 each bind GTP; these read DTPGH and NKMD. The segment at 229–232 is G4; sequence NKMD. The interval 265-267 is G5; sequence SAL.

It belongs to the TRAFAC class translation factor GTPase superfamily. Classic translation factor GTPase family. IF-2 subfamily.

It localises to the cytoplasm. One of the essential components for the initiation of protein synthesis. Protects formylmethionyl-tRNA from spontaneous hydrolysis and promotes its binding to the 30S ribosomal subunits. Also involved in the hydrolysis of GTP during the formation of the 70S ribosomal complex. The protein is Translation initiation factor IF-2 (infB) of Mycoplasma pneumoniae (strain ATCC 29342 / M129 / Subtype 1) (Mycoplasmoides pneumoniae).